Here is a 664-residue protein sequence, read N- to C-terminus: MTEKTNGVKSSPANNHNHHAPPAIKANGKDDHRTSSRPHSAADDDTSSELQRLADVDAPQQGRSGFRRIVRLVGIIREWANKNFREEEPRPDSFLERFRGPELQTVTTQEGDGKGDKDGEDKGTKKKFELFVLDPAGDWYYCWLFVIAMPVLYNWCLLVARACFSDLQKGYYLVWLVLDYVSDVVYIADLFIRLRTGFLEQGLLVKDTKKLRDNYIHTLQFKLDVASIIPTDLIYFAVDIHSPEVRFNRLLHFARMFEFFDRTETRTNYPNIFRISNLVLYILVIIHWNACIYYAISKSIGFGVDTWVYPNITDPEYGYLAREYIYCLYWSTLTLTTIGETPPPVKDEEYLFVIFDFLIGVLIFATIVGNVGSMISNMNATRAEFQAKIDAVKHYMQFRKVSKGMEAKVIRWFDYLWTNKKTVDEREILKNLPAKLRAEIAINVHLSTLKKVRIFHDCEAGLLVELVLKLRPQVFSPGDYICRKGDIGKEMYIIKEGKLAVVADDGVTQYALLSAGSCFGEISILNIKGSKMGNRRTANIRSLGYSDLFCLSKDDLMEAVTEYPDAKKVLEERGREILMKEGLLDENEVATSMEVDVQEKLGQLETNMETLYTRFGRLLAEYTGAQQKLKQRITVLETKMKQNNEDDYLSDGMNSPELAAADEP.

Polar residues predominate over residues M1 to S11. The interval M1–E49 is disordered. The Cytoplasmic segment spans residues M1–L144. Positions P12 to A23 are enriched in low complexity. Residues F145–D166 form a helical membrane-spanning segment. Residues L167–L176 are Extracellular-facing. A helical membrane pass occupies residues V177–G197. The Cytoplasmic segment spans residues F198 to K222. A helical membrane pass occupies residues L223–H241. Residues S242–R246 are Extracellular-facing. A helical membrane pass occupies residues F247–T265. At R266–I272 the chain is on the cytoplasmic side. The tract at residues P270 to M378 is ion conduction pathway. A helical membrane pass occupies residues F273–I296. Residues S297–Y319 are Extracellular-facing. Transmembrane regions (helical) follow at residues L320–I354 and F355–N379. Residues T337–E340 are selectivity filter. A C-linker region spans residues A380–H456. The Cytoplasmic portion of the chain corresponds to A380–P664. Residues A460–K580 are cyclic nucleotide-binding domain. The 3',5'-cyclic GMP site is built by G520, S523, R536, and T537. 3',5'-cyclic AMP contacts are provided by R536 and T537. A coiled-coil region spans residues V597–D651. The interval K641–P664 is disordered.

This sequence belongs to the cyclic nucleotide-gated cation channel (TC 1.A.1.5) family. CNGA2 subfamily. The olfactory cyclic nucleotide-gated channel is an heterotetramer composed of CNGA2, CNGA4 and CNGB1b subunits with 2:1:1 stoichiometry.

Its subcellular location is the cell projection. The protein localises to the cilium membrane. The catalysed reaction is Ca(2+)(in) = Ca(2+)(out). The enzyme catalyses Na(+)(in) = Na(+)(out). It catalyses the reaction K(+)(in) = K(+)(out). It carries out the reaction NH4(+)(in) = NH4(+)(out). The catalysed reaction is Rb(+)(in) = Rb(+)(out). The enzyme catalyses Li(+)(in) = Li(+)(out). It catalyses the reaction Cs(+)(in) = Cs(+)(out). In terms of biological role, pore-forming subunit of the olfactory cyclic nucleotide-gated channel. Operates in the cilia of olfactory sensory neurons where chemical stimulation of the odorant is converted to an electrical signal. Mediates odorant-induced cAMP-dependent Ca(2+) influx triggering neuron depolarization. The rise of intracellular Ca(2+) levels potentiates the olfactory response by activating Ca(2+)-dependent Cl(-) channels, but it also serves as a negative feedback signal to desensitize the channel for rapid adaptation to odorants. Conducts cAMP- and cGMP-gated ion currents, with permeability for monovalent and divalent cations. This Homo sapiens (Human) protein is Cyclic nucleotide-gated channel alpha-2.